The primary structure comprises 274 residues: 3',5'-cyclic adenosine monophosphate phosphodiesterase CpdA (274 aa).

Positions 21, 23, 63, 93, 163, 202, and 204 each coordinate Fe cation. AMP-binding positions include His-23, Asp-63, and 93–94; that span reads NH. His-204 serves as a coordination point for AMP.

This sequence belongs to the cyclic nucleotide phosphodiesterase class-III family. Fe(2+) is required as a cofactor.

The catalysed reaction is 3',5'-cyclic AMP + H2O = AMP + H(+). In terms of biological role, hydrolyzes cAMP to 5'-AMP. Plays an important regulatory role in modulating the intracellular concentration of cAMP, thereby influencing cAMP-dependent processes. May coordinate responses to nutritional stress, ensuring optimal competence development. The chain is 3',5'-cyclic adenosine monophosphate phosphodiesterase CpdA from Haemophilus influenzae (strain ATCC 51907 / DSM 11121 / KW20 / Rd).